Here is a 166-residue protein sequence, read N- to C-terminus: Cofilin-2 (166 aa).

One can recognise an ADF-H domain in the interval Gly4–Leu153. Position 24 is a phosphoserine (Ser24). The Nuclear localization signal motif lies at Lys30–Lys34.

This sequence belongs to the actin-binding proteins ADF family. In terms of processing, the phosphorylation of Ser-24 may prevent recognition of the nuclear localization signal. In terms of tissue distribution, widely distributed in various tissues.

It localises to the nucleus matrix. The protein resides in the cytoplasm. It is found in the cytoskeleton. In terms of biological role, controls reversibly actin polymerization and depolymerization in a pH-sensitive manner. It has the ability to bind G- and F-actin in a 1:1 ratio of cofilin to actin. It is the major component of intranuclear and cytoplasmic actin rods. The chain is Cofilin-2 (CFL2) from Gallus gallus (Chicken).